Consider the following 462-residue polypeptide: uncharacterized protein (462 aa).

A disordered region spans residues 405 to 462; the sequence is QPIGNNKSSPMKREFTAMEEDKTETGDIFKLLSQQKPAKGAKSKSKKYKKTEEDLSAV. Over residues 415–431 the composition is skewed to basic and acidic residues; that stretch reads MKREFTAMEEDKTETGD. The segment covering 443-453 has biased composition (basic residues); sequence KGAKSKSKKYK.

This is an uncharacterized protein from Magallana gigas (Pacific oyster).